Consider the following 455-residue polypeptide: Tubby-like F-box protein 1 (455 aa).

Residues 54–112 (ETPWANLPPELLRDVIKRLEESESVWPARRHVVACASVCRSWRDMCKEIVQSPELSGKI) form the F-box domain. The tract at residues 386 to 414 (QPQPQPQPQPQPQPLTQPQPSGQTDGPDK) is disordered. Pro residues predominate over residues 388–402 (QPQPQPQPQPQPLTQ).

Belongs to the TUB family. In terms of tissue distribution, ubiquitous.

The polypeptide is Tubby-like F-box protein 1 (Arabidopsis thaliana (Mouse-ear cress)).